We begin with the raw amino-acid sequence, 339 residues long: Phosphoribosylformylglycinamidine cyclo-ligase (339 aa).

The protein belongs to the AIR synthase family.

It is found in the cytoplasm. It carries out the reaction 2-formamido-N(1)-(5-O-phospho-beta-D-ribosyl)acetamidine + ATP = 5-amino-1-(5-phospho-beta-D-ribosyl)imidazole + ADP + phosphate + H(+). It functions in the pathway purine metabolism; IMP biosynthesis via de novo pathway; 5-amino-1-(5-phospho-D-ribosyl)imidazole from N(2)-formyl-N(1)-(5-phospho-D-ribosyl)glycinamide: step 2/2. The polypeptide is Phosphoribosylformylglycinamidine cyclo-ligase (Oceanobacillus iheyensis (strain DSM 14371 / CIP 107618 / JCM 11309 / KCTC 3954 / HTE831)).